Consider the following 274-residue polypeptide: Ribosomal RNA small subunit methyltransferase A (274 aa).

Residues N27, L29, G54, E75, D100, and N121 each coordinate S-adenosyl-L-methionine.

The protein belongs to the class I-like SAM-binding methyltransferase superfamily. rRNA adenine N(6)-methyltransferase family. RsmA subfamily.

It localises to the cytoplasm. It catalyses the reaction adenosine(1518)/adenosine(1519) in 16S rRNA + 4 S-adenosyl-L-methionine = N(6)-dimethyladenosine(1518)/N(6)-dimethyladenosine(1519) in 16S rRNA + 4 S-adenosyl-L-homocysteine + 4 H(+). Its function is as follows. Specifically dimethylates two adjacent adenosines (A1518 and A1519) in the loop of a conserved hairpin near the 3'-end of 16S rRNA in the 30S particle. May play a critical role in biogenesis of 30S subunits. This chain is Ribosomal RNA small subunit methyltransferase A, found in Acinetobacter baylyi (strain ATCC 33305 / BD413 / ADP1).